The following is a 137-amino-acid chain: Putative nickel-responsive regulator (137 aa).

Ni(2+)-binding residues include His-79, His-90, His-92, and Cys-98.

The protein belongs to the transcriptional regulatory CopG/NikR family. Requires Ni(2+) as cofactor.

Transcriptional regulator. This Campylobacter concisus (strain 13826) protein is Putative nickel-responsive regulator.